A 398-amino-acid polypeptide reads, in one-letter code: Tryptophan synthase beta chain (398 aa).

At Lys89 the chain carries N6-(pyridoxal phosphate)lysine.

The protein belongs to the TrpB family. In terms of assembly, tetramer of two alpha and two beta chains. Requires pyridoxal 5'-phosphate as cofactor.

It carries out the reaction (1S,2R)-1-C-(indol-3-yl)glycerol 3-phosphate + L-serine = D-glyceraldehyde 3-phosphate + L-tryptophan + H2O. The protein operates within amino-acid biosynthesis; L-tryptophan biosynthesis; L-tryptophan from chorismate: step 5/5. Its function is as follows. The beta subunit is responsible for the synthesis of L-tryptophan from indole and L-serine. This is Tryptophan synthase beta chain from Methanopyrus kandleri (strain AV19 / DSM 6324 / JCM 9639 / NBRC 100938).